The primary structure comprises 421 residues: Imidazolonepropionase (421 aa).

Positions 81 and 83 each coordinate Fe(3+). Positions 81 and 83 each coordinate Zn(2+). 4-imidazolone-5-propanoate is bound by residues Arg90, Tyr153, and His186. Position 153 (Tyr153) interacts with N-formimidoyl-L-glutamate. His251 provides a ligand contact to Fe(3+). His251 contributes to the Zn(2+) binding site. A 4-imidazolone-5-propanoate-binding site is contributed by Glu254. Asp326 contributes to the Fe(3+) binding site. A Zn(2+)-binding site is contributed by Asp326. Positions 328 and 330 each coordinate N-formimidoyl-L-glutamate. Position 331 (Ser331) interacts with 4-imidazolone-5-propanoate.

Belongs to the metallo-dependent hydrolases superfamily. HutI family. Zn(2+) serves as cofactor. The cofactor is Fe(3+).

The protein localises to the cytoplasm. It carries out the reaction 4-imidazolone-5-propanoate + H2O = N-formimidoyl-L-glutamate. Its pathway is amino-acid degradation; L-histidine degradation into L-glutamate; N-formimidoyl-L-glutamate from L-histidine: step 3/3. In terms of biological role, catalyzes the hydrolytic cleavage of the carbon-nitrogen bond in imidazolone-5-propanoate to yield N-formimidoyl-L-glutamate. It is the third step in the universal histidine degradation pathway. The protein is Imidazolonepropionase of Streptococcus pyogenes serotype M1.